A 343-amino-acid polypeptide reads, in one-letter code: Glyceraldehyde-3-phosphate dehydrogenase (343 aa).

NAD(+)-binding positions include 11-12 (TI) and glycine 110. A D-glyceraldehyde 3-phosphate-binding site is contributed by 139 to 141 (SCN). Residue cysteine 140 is the Nucleophile of the active site. Arginine 168 is an NAD(+) binding site. Position 194–195 (194–195 (HG)) interacts with D-glyceraldehyde 3-phosphate. Glutamine 301 contributes to the NAD(+) binding site.

The protein belongs to the glyceraldehyde-3-phosphate dehydrogenase family. As to quaternary structure, homotetramer.

The protein localises to the cytoplasm. It carries out the reaction D-glyceraldehyde 3-phosphate + phosphate + NADP(+) = (2R)-3-phospho-glyceroyl phosphate + NADPH + H(+). It catalyses the reaction D-glyceraldehyde 3-phosphate + phosphate + NAD(+) = (2R)-3-phospho-glyceroyl phosphate + NADH + H(+). Its pathway is carbohydrate degradation; glycolysis; pyruvate from D-glyceraldehyde 3-phosphate: step 1/5. The chain is Glyceraldehyde-3-phosphate dehydrogenase from Methanoregula boonei (strain DSM 21154 / JCM 14090 / 6A8).